A 134-amino-acid chain; its full sequence is Profilin-2 (134 aa).

An intrachain disulfide couples cysteine 13 to cysteine 118. An Involved in PIP2 interaction motif is present at residues 84-100; the sequence is AVIRGKKGSGGITIKKT. Threonine 114 bears the Phosphothreonine mark.

It belongs to the profilin family. In terms of assembly, occurs in many kinds of cells as a complex with monomeric actin in a 1:1 ratio. Phosphorylated by MAP kinases.

The protein resides in the cytoplasm. Its subcellular location is the cytoskeleton. Functionally, binds to actin and affects the structure of the cytoskeleton. At high concentrations, profilin prevents the polymerization of actin, whereas it enhances it at low concentrations. The polypeptide is Profilin-2 (Olea europaea (Common olive)).